Reading from the N-terminus, the 375-residue chain is 23S rRNA (uracil(747)-C(5))-methyltransferase RlmC (375 aa).

4 residues coordinate [4Fe-4S] cluster: cysteine 3, cysteine 11, cysteine 14, and cysteine 87. S-adenosyl-L-methionine contacts are provided by glutamine 212, phenylalanine 241, glutamate 262, and asparagine 307. Cysteine 334 functions as the Nucleophile in the catalytic mechanism.

This sequence belongs to the class I-like SAM-binding methyltransferase superfamily. RNA M5U methyltransferase family. RlmC subfamily.

It catalyses the reaction uridine(747) in 23S rRNA + S-adenosyl-L-methionine = 5-methyluridine(747) in 23S rRNA + S-adenosyl-L-homocysteine + H(+). Its function is as follows. Catalyzes the formation of 5-methyl-uridine at position 747 (m5U747) in 23S rRNA. The sequence is that of 23S rRNA (uracil(747)-C(5))-methyltransferase RlmC from Salmonella dublin (strain CT_02021853).